The primary structure comprises 316 residues: Acetyl-coenzyme A carboxylase carboxyl transferase subunit alpha (316 aa).

Positions 36-290 constitute a CoA carboxyltransferase C-terminal domain; sequence KLEQKLDSLK…KQFLVEQLHI (255 aa).

It belongs to the AccA family. Acetyl-CoA carboxylase is a heterohexamer composed of biotin carboxyl carrier protein (AccB), biotin carboxylase (AccC) and two subunits each of ACCase subunit alpha (AccA) and ACCase subunit beta (AccD).

The protein resides in the cytoplasm. It catalyses the reaction N(6)-carboxybiotinyl-L-lysyl-[protein] + acetyl-CoA = N(6)-biotinyl-L-lysyl-[protein] + malonyl-CoA. Its pathway is lipid metabolism; malonyl-CoA biosynthesis; malonyl-CoA from acetyl-CoA: step 1/1. Functionally, component of the acetyl coenzyme A carboxylase (ACC) complex. First, biotin carboxylase catalyzes the carboxylation of biotin on its carrier protein (BCCP) and then the CO(2) group is transferred by the carboxyltransferase to acetyl-CoA to form malonyl-CoA. This chain is Acetyl-coenzyme A carboxylase carboxyl transferase subunit alpha, found in Protochlamydia amoebophila (strain UWE25).